The following is a 652-amino-acid chain: DNA ligase (652 aa).

NAD(+)-binding positions include 29–33 (DAEYD), 78–79 (SL), and glutamate 107. The active-site N6-AMP-lysine intermediate is the lysine 109. 4 residues coordinate NAD(+): arginine 130, glutamate 164, lysine 278, and lysine 302. The Zn(2+) site is built by cysteine 395, cysteine 398, cysteine 413, and cysteine 418. The 76-residue stretch at 577-652 (DENAALSGMT…IKDEAWLESL (76 aa)) folds into the BRCT domain.

It belongs to the NAD-dependent DNA ligase family. LigA subfamily. Mg(2+) serves as cofactor. The cofactor is Mn(2+).

The enzyme catalyses NAD(+) + (deoxyribonucleotide)n-3'-hydroxyl + 5'-phospho-(deoxyribonucleotide)m = (deoxyribonucleotide)n+m + AMP + beta-nicotinamide D-nucleotide.. Its function is as follows. DNA ligase that catalyzes the formation of phosphodiester linkages between 5'-phosphoryl and 3'-hydroxyl groups in double-stranded DNA using NAD as a coenzyme and as the energy source for the reaction. It is essential for DNA replication and repair of damaged DNA. In Streptococcus suis (strain 98HAH33), this protein is DNA ligase.